Here is a 454-residue protein sequence, read N- to C-terminus: tRNA-2-methylthio-N(6)-dimethylallyladenosine synthase (454 aa).

The MTTase N-terminal domain maps to 6–122 (RRYHITTFGC…LKDLLESVFA (117 aa)). Positions 15, 51, 85, 157, 161, and 164 each coordinate [4Fe-4S] cluster. In terms of domain architecture, Radical SAM core spans 143–380 (RDSTVTAWVN…NHLVNVKAAE (238 aa)). Residues 383-447 (QRYMGRIEEV…AFSLTGEPIE (65 aa)) form the TRAM domain.

This sequence belongs to the methylthiotransferase family. MiaB subfamily. As to quaternary structure, monomer. [4Fe-4S] cluster is required as a cofactor.

It is found in the cytoplasm. It carries out the reaction N(6)-dimethylallyladenosine(37) in tRNA + (sulfur carrier)-SH + AH2 + 2 S-adenosyl-L-methionine = 2-methylsulfanyl-N(6)-dimethylallyladenosine(37) in tRNA + (sulfur carrier)-H + 5'-deoxyadenosine + L-methionine + A + S-adenosyl-L-homocysteine + 2 H(+). Functionally, catalyzes the methylthiolation of N6-(dimethylallyl)adenosine (i(6)A), leading to the formation of 2-methylthio-N6-(dimethylallyl)adenosine (ms(2)i(6)A) at position 37 in tRNAs that read codons beginning with uridine. The polypeptide is tRNA-2-methylthio-N(6)-dimethylallyladenosine synthase (Nostoc sp. (strain PCC 7120 / SAG 25.82 / UTEX 2576)).